The chain runs to 193 residues: Oocyte-secreted protein 3 (193 aa).

Residues 1–22 (MKDFVRLQSSFLLCTILTLSEQ) form the signal peptide. 6 N-linked (GlcNAc...) asparagine glycosylation sites follow: Asn-64, Asn-130, Asn-148, Asn-151, Asn-165, and Asn-178.

Belongs to the PLAC1 family.

The protein resides in the secreted. The chain is Oocyte-secreted protein 3 from Homo sapiens (Human).